The sequence spans 761 residues: BMP/retinoic acid-inducible neural-specific protein 1 (761 aa).

A signal peptide spans 1-19 (MNWRFVELLYFLFIWGRIS). Positions 68–251 (RYKIYREFAR…FVQSALSYIM (184 aa)) constitute an MACPF domain. N156, N433, N443, N553, N599, N631, and N677 each carry an N-linked (GlcNAc...) asparagine glycan.

It belongs to the BRINP family. As to expression, highly expressed in brain. Weakly expressed in heart, lung, skeletal muscle, kidney, thymus, prostate, testis and small intestine.

It localises to the cytoplasm. In terms of biological role, plays a role in neurogenesis and brain development. May suppress cell cycle progression in postmitotic neurons by inhibiting G1/S transition. The polypeptide is BMP/retinoic acid-inducible neural-specific protein 1 (BRINP1) (Homo sapiens (Human)).